Reading from the N-terminus, the 195-residue chain is 3-isopropylmalate dehydratase small subunit (195 aa).

It belongs to the LeuD family. LeuD type 1 subfamily. As to quaternary structure, heterodimer of LeuC and LeuD.

The catalysed reaction is (2R,3S)-3-isopropylmalate = (2S)-2-isopropylmalate. It participates in amino-acid biosynthesis; L-leucine biosynthesis; L-leucine from 3-methyl-2-oxobutanoate: step 2/4. In terms of biological role, catalyzes the isomerization between 2-isopropylmalate and 3-isopropylmalate, via the formation of 2-isopropylmaleate. This Koribacter versatilis (strain Ellin345) protein is 3-isopropylmalate dehydratase small subunit.